A 393-amino-acid polypeptide reads, in one-letter code: uncharacterized protein (393 aa).

[4Fe-4S] cluster-binding residues include C72, C82, C85, and C160. Residues Q215, F245, E267, and D313 each contribute to the S-adenosyl-L-methionine site. C340 acts as the Nucleophile in catalysis.

This sequence belongs to the class I-like SAM-binding methyltransferase superfamily. RNA M5U methyltransferase family.

This is an uncharacterized protein from Nitrosomonas europaea (strain ATCC 19718 / CIP 103999 / KCTC 2705 / NBRC 14298).